The primary structure comprises 888 residues: Alanine--tRNA ligase (888 aa).

4 residues coordinate Zn(2+): His573, His577, Cys676, and His680.

It belongs to the class-II aminoacyl-tRNA synthetase family. Zn(2+) is required as a cofactor.

It is found in the cytoplasm. The enzyme catalyses tRNA(Ala) + L-alanine + ATP = L-alanyl-tRNA(Ala) + AMP + diphosphate. In terms of biological role, catalyzes the attachment of alanine to tRNA(Ala) in a two-step reaction: alanine is first activated by ATP to form Ala-AMP and then transferred to the acceptor end of tRNA(Ala). Also edits incorrectly charged Ser-tRNA(Ala) and Gly-tRNA(Ala) via its editing domain. This Corynebacterium glutamicum (strain R) protein is Alanine--tRNA ligase.